Reading from the N-terminus, the 333-residue chain is 4-hydroxy-2-oxovalerate aldolase (333 aa).

The region spanning 4 to 254 is the Pyruvate carboxyltransferase domain; that stretch reads VKIFDLTLRD…DCGIDLYKTM (251 aa). Substrate is bound at residue 12 to 13; that stretch reads RD. D13 lines the Mn(2+) pocket. The Proton acceptor role is filled by H16. Residue H193 coordinates substrate. Mn(2+) contacts are provided by H193 and H195. Y284 serves as a coordination point for substrate.

It belongs to the 4-hydroxy-2-oxovalerate aldolase family.

The catalysed reaction is (S)-4-hydroxy-2-oxopentanoate = acetaldehyde + pyruvate. The protein is 4-hydroxy-2-oxovalerate aldolase of Desulfitobacterium hafniense (strain DSM 10664 / DCB-2).